Consider the following 202-residue polypeptide: Alpha-1-acid glycoprotein (202 aa).

Positions 1 to 18 (MALLWALAVLSHLPLLDA) are cleaved as a signal peptide. N34, N57, N94, N104, and N136 each carry an N-linked (GlcNAc...) asparagine glycan. An intrachain disulfide couples C91 to C184.

Belongs to the calycin superfamily. Lipocalin family.

It is found in the secreted. Functionally, functions as a transport protein in the blood stream. Binds various ligands in the interior of its beta-barrel domain. Appears to function in modulating the activity of the immune system during the acute-phase reaction. The sequence is that of Alpha-1-acid glycoprotein (ORM1) from Bos taurus (Bovine).